The following is a 1097-amino-acid chain: DNA-directed RNA polymerase subunit beta (1097 aa).

Positions 1072–1097 (QDVNPRRSTPSRPTYESLGVADYDED) are disordered.

Belongs to the RNA polymerase beta chain family. In terms of assembly, in cyanobacteria the RNAP catalytic core is composed of 2 alpha, 1 beta, 1 beta', 1 gamma and 1 omega subunit. When a sigma factor is associated with the core the holoenzyme is formed, which can initiate transcription.

The enzyme catalyses RNA(n) + a ribonucleoside 5'-triphosphate = RNA(n+1) + diphosphate. Functionally, DNA-dependent RNA polymerase catalyzes the transcription of DNA into RNA using the four ribonucleoside triphosphates as substrates. The protein is DNA-directed RNA polymerase subunit beta of Synechococcus sp. (strain WH7803).